Here is a 1088-residue protein sequence, read N- to C-terminus: Protein unc-13 homolog D (1088 aa).

The disordered stretch occupies residues Val26 to His46. In terms of domain architecture, C2 1 spans Gln92 to Gln239. Asp127 and Asp133 together coordinate Ca(2+). Ser150 bears the Phosphoserine mark. The Ca(2+) site is built by Asp206 and Asp208. The segment at Asp240–Ala543 is interaction with RAB27A. The 119-residue stretch at Phe557–Ile675 folds into the MHD1 domain. The MHD2 domain maps to Glu786 to Tyr893. In terms of domain architecture, C2 2 spans Arg908 to Gly1033. 6 residues coordinate Ca(2+): Leu938, Asp939, Asp945, Asp1003, Asp1005, and Asp1011.

It belongs to the unc-13 family. Interacts with RAB27A and DOC2A. Interacts with RhoG; the interaction increases RhoG affinity to the membrane lipids, targets Unc13d to membrane lipids and facilitates cytotoxic granule (CG) docking to the plasma membrane. Ca(2+) serves as cofactor. In terms of tissue distribution, expressed in lung bronchial epithelium goblet/mucous cells. Also expressed in spleen and testis. Expressed at very low levels in heart muscle, kidney, liver, brain and skeletal muscle.

The protein localises to the cytoplasm. It localises to the membrane. Its subcellular location is the late endosome. The protein resides in the recycling endosome. It is found in the lysosome. In terms of biological role, plays a role in cytotoxic granule exocytosis in lymphocytes. Required for both granule maturation and granule docking and priming at the immunologic synapse. Regulates assembly of recycling and late endosomal structures, leading to the formation of an endosomal exocytic compartment that fuses with perforin-containing granules at the immunologic synapse and licences them for exocytosis. Regulates Ca(2+)-dependent secretory lysosome exocytosis in mast cells. The chain is Protein unc-13 homolog D (Unc13d) from Rattus norvegicus (Rat).